The chain runs to 93 residues: Small ribosomal subunit protein uS19 (93 aa).

Belongs to the universal ribosomal protein uS19 family.

Protein S19 forms a complex with S13 that binds strongly to the 16S ribosomal RNA. The sequence is that of Small ribosomal subunit protein uS19 from Pseudarthrobacter chlorophenolicus (strain ATCC 700700 / DSM 12829 / CIP 107037 / JCM 12360 / KCTC 9906 / NCIMB 13794 / A6) (Arthrobacter chlorophenolicus).